The following is a 68-amino-acid chain: Protein transport protein Sec61 subunit gamma (68 aa).

Over 1–32 (MDQVMQFVEPSRQFVKDSIRLVKRCTKPDRKE) the chain is Cytoplasmic. Residues 33–61 (FQKVAMATAIGFAIMGFIGFFVKLIHIPI) form a helical membrane-spanning segment. The Extracellular segment spans residues 62–68 (NNIIVGG).

It belongs to the SecE/SEC61-gamma family. The SEC61 channel-forming translocon complex consists of channel-forming core components SEC61A1, SEC61B and SEC61G and different auxiliary components such as SEC62 and SEC63. The SEC61 channel associates with the multi-pass translocon (MPT) complex.

It is found in the endoplasmic reticulum membrane. Component of SEC61 channel-forming translocon complex that mediates transport of signal peptide-containing precursor polypeptides across the endoplasmic reticulum (ER). Forms a ribosome receptor and a gated pore in the ER membrane, both functions required for cotranslational translocation of nascent polypeptides. The SEC61 channel is also involved in ER membrane insertion of transmembrane proteins: it mediates membrane insertion of the first few transmembrane segments of proteins, while insertion of subsequent transmembrane regions of multi-pass membrane proteins is mediated by the multi-pass translocon (MPT) complex. The chain is Protein transport protein Sec61 subunit gamma (sec61g) from Harpagifer antarcticus (Antarctic spiny plunderfish).